Consider the following 656-residue polypeptide: Methylenetetrahydrofolate reductase (NADPH) (656 aa).

Positions 1–12 (MVNEARGNSSLN) are enriched in polar residues. The segment at 1 to 44 (MVNEARGNSSLNPCLEGSASSGSESSKDSSRCSTPGLDPERHER) is disordered. Phosphoserine occurs at positions 9, 10, 18, 20, 21, 23, 25, 26, 29, and 30. Threonine 34 is subject to Phosphothreonine. Glutamate 63 functions as the Proton donor/acceptor in the catalytic mechanism. 63–68 (EFFPPR) is a binding site for NAD(+). Tyrosine 90 bears the Phosphotyrosine mark. Phosphothreonine is present on threonine 94. Position 94-95 (94-95 (TW)) interacts with NAD(+). 94 to 95 (TW) is a binding site for FAD. Serine 103 is subject to Phosphoserine. FAD contacts are provided by residues histidine 127, 157 to 159 (RGD), 174 to 175 (YA), tyrosine 197, 201 to 204 (HPEA), aspartate 210, and lysine 217. Aspartate 159 serves as a coordination point for substrate. 3 residues coordinate substrate: glutamine 228, tyrosine 321, and arginine 325. Serine 394 carries the post-translational modification Phosphoserine. The residue at position 451 (threonine 451) is a Phosphothreonine. S-adenosyl-L-methionine-binding positions include asparagine 456, 461–464 (AAET), 481–485 (TINSQ), threonine 560, and threonine 573.

It belongs to the methylenetetrahydrofolate reductase family. As to quaternary structure, homodimer. The cofactor is FAD. Post-translationally, phosphorylation of an N-terminal serine-rich phosphorylation region increases sensitivity to S-adenosylmethionine and inhibition.

The catalysed reaction is (6S)-5-methyl-5,6,7,8-tetrahydrofolate + NADP(+) = (6R)-5,10-methylene-5,6,7,8-tetrahydrofolate + NADPH + H(+). It functions in the pathway one-carbon metabolism; tetrahydrofolate interconversion. Allosterically regulated by S-adenosylmethionine (SAM). Its function is as follows. Catalyzes the conversion of 5,10-methylenetetrahydrofolate to 5-methyltetrahydrofolate, a cosubstrate for homocysteine remethylation to methionine. Represents a key regulatory connection between the folate and methionine cycles. This chain is Methylenetetrahydrofolate reductase (NADPH), found in Homo sapiens (Human).